We begin with the raw amino-acid sequence, 335 residues long: Tryptophan--tRNA ligase (335 aa).

ATP contacts are provided by residues 9-11 (QST) and 17-18 (GN). The 'HIGH' region motif lies at 10–18 (STNSLTLGN). Residue Asp-137 participates in L-tryptophan binding. ATP is bound by residues 149 to 151 (GKD), Ile-189, and 198 to 202 (KMSKS). Residues 198-202 (KMSKS) carry the 'KMSKS' region motif.

Belongs to the class-I aminoacyl-tRNA synthetase family. Homodimer.

It localises to the cytoplasm. The catalysed reaction is tRNA(Trp) + L-tryptophan + ATP = L-tryptophyl-tRNA(Trp) + AMP + diphosphate + H(+). Functionally, catalyzes the attachment of tryptophan to tRNA(Trp). This is Tryptophan--tRNA ligase from Malacoplasma penetrans (strain HF-2) (Mycoplasma penetrans).